The primary structure comprises 310 residues: tRNA dimethylallyltransferase (310 aa).

Residue 24 to 31 (GPTASGKT) coordinates ATP. 26–31 (TASGKT) is a binding site for substrate. The tract at residues 49 to 52 (DSRQ) is interaction with substrate tRNA.

The protein belongs to the IPP transferase family. Monomer. Requires Mg(2+) as cofactor.

The enzyme catalyses adenosine(37) in tRNA + dimethylallyl diphosphate = N(6)-dimethylallyladenosine(37) in tRNA + diphosphate. Its function is as follows. Catalyzes the transfer of a dimethylallyl group onto the adenine at position 37 in tRNAs that read codons beginning with uridine, leading to the formation of N6-(dimethylallyl)adenosine (i(6)A). The polypeptide is tRNA dimethylallyltransferase (Synechococcus sp. (strain WH7803)).